The chain runs to 509 residues: Maturase K (509 aa).

This sequence belongs to the intron maturase 2 family. MatK subfamily.

The protein localises to the plastid. In terms of biological role, usually encoded in the trnK tRNA gene intron. Probably assists in splicing its own and other chloroplast group II introns. The polypeptide is Maturase K (Castilleja linariifolia (Wyoming Indian paintbrush)).